The sequence spans 612 residues: Vitamin B12 transporter BtuB (612 aa).

Positions 1-20 (MIKKSLLCTALSVTAFSGWA) are cleaved as a signal peptide. A TonB box motif is present at residues 26 to 33 (DTLVVTAN). One can recognise a TBDR plug domain in the interval 38-152 (PRSAVLAPIT…IGGVVNIITT (115 aa)). Cyanocob(III)alamin contacts are provided by residues S85, N92, and 110-111 (VS). The TBDR beta-barrel domain maps to 155-612 (KPGTELTAGV…EYTLSGSYTF (458 aa)). Transmembrane regions (beta stranded) follow at residues 158-165 (TELTAGVG), 169-178 (YQNYDVSTQQ), and 184-195 (TRVTLMGDYAYT). Positions 199, 211, 213, and 215 each coordinate Ca(2+). The next 2 membrane-spanning stretches (beta stranded) occupy residues 217 to 227 (FLSKTLYGALE) and 232 to 248 (DTWSGFVRGYGYDNRTN). The Ca(2+) site is built by Y249, D250, and D261. 14 beta stranded membrane-spanning segments follow: residues 263–277 (RKLYSQSWDAGLRFN), 279–296 (ELIQSQLVSSYSHSKDYN), 309–325 (TLDEMKQYNVQWSNSIV), 328–337 (HGNVGAGVDW), 353–369 (YDQRNTGLYLTGLQQLG), 371–381 (FTFEGAARSDD), 385–400 (FGRHGTWQTSAGWEFI), 403–417 (YRFIASYGTSYKAPN), 434–443 (QSKQWEGAFE), 449–458 (VNWRVSGYRN), 473–490 (YFNEGKVRIKGVEATANF), 494–509 (PLAHTLSYDMVDSRNA), 517–529 (RRSKQQVKYQLDW), and 535–550 (DWGLTYHYLGTRYDTD). Residue T309 participates in cyanocob(III)alamin binding. R517 is a cyanocob(III)alamin binding site. Residue Y551 participates in cyanocob(III)alamin binding. Beta stranded transmembrane passes span 556–570 (PVKMGGVSLWDLAVS), 583–594 (IANRFDKDYETV), and 600–612 (AGREYTLSGSYTF). Positions 595 to 612 (YGYATAGREYTLSGSYTF) match the TonB C-terminal box motif.

This sequence belongs to the TonB-dependent receptor family. BtuB (TC 1.B.14.3.1) subfamily.

The protein resides in the cell outer membrane. Functionally, involved in the active translocation of vitamin B12 (cyanocobalamin) across the outer membrane to the periplasmic space. It derives its energy for transport by interacting with the trans-periplasmic membrane protein TonB. This is Vitamin B12 transporter BtuB from Citrobacter freundii.